We begin with the raw amino-acid sequence, 93 residues long: Small ribosomal subunit protein uS19m (93 aa).

It belongs to the universal ribosomal protein uS19 family. As to quaternary structure, component of the mitochondrial small ribosomal subunit (mt-SSU). Mature yeast 74S mitochondrial ribosomes consist of a small (37S) and a large (54S) subunit. The 37S small subunit contains a 15S ribosomal RNA (15S mt-rRNA) and at least 32 different proteins. The 54S large subunit contains a 21S rRNA (21S mt-rRNA) and at least 45 different proteins.

The protein resides in the mitochondrion. Component of the mitochondrial ribosome (mitoribosome), a dedicated translation machinery responsible for the synthesis of mitochondrial genome-encoded proteins, including at least some of the essential transmembrane subunits of the mitochondrial respiratory chain. The mitoribosomes are attached to the mitochondrial inner membrane and translation products are cotranslationally integrated into the membrane. This chain is Small ribosomal subunit protein uS19m (rsm19), found in Schizosaccharomyces pombe (strain 972 / ATCC 24843) (Fission yeast).